A 451-amino-acid chain; its full sequence is UDP-N-acetylmuramoylalanine--D-glutamate ligase (451 aa).

Residue 119 to 125 (GSNGKTT) coordinates ATP.

It belongs to the MurCDEF family.

It is found in the cytoplasm. The enzyme catalyses UDP-N-acetyl-alpha-D-muramoyl-L-alanine + D-glutamate + ATP = UDP-N-acetyl-alpha-D-muramoyl-L-alanyl-D-glutamate + ADP + phosphate + H(+). The protein operates within cell wall biogenesis; peptidoglycan biosynthesis. Its function is as follows. Cell wall formation. Catalyzes the addition of glutamate to the nucleotide precursor UDP-N-acetylmuramoyl-L-alanine (UMA). The protein is UDP-N-acetylmuramoylalanine--D-glutamate ligase of Streptococcus agalactiae serotype III (strain NEM316).